A 514-amino-acid polypeptide reads, in one-letter code: Histidine ammonia-lyase (514 aa).

Positions 147-149 form a cross-link, 5-imidazolinone (Ala-Gly); the sequence is ASG. The residue at position 148 (S148) is a 2,3-didehydroalanine (Ser).

It belongs to the PAL/histidase family. In terms of processing, contains an active site 4-methylidene-imidazol-5-one (MIO), which is formed autocatalytically by cyclization and dehydration of residues Ala-Ser-Gly.

It localises to the cytoplasm. The catalysed reaction is L-histidine = trans-urocanate + NH4(+). Its pathway is amino-acid degradation; L-histidine degradation into L-glutamate; N-formimidoyl-L-glutamate from L-histidine: step 1/3. The protein is Histidine ammonia-lyase of Gloeobacter violaceus (strain ATCC 29082 / PCC 7421).